The following is a 230-amino-acid chain: Orotidine 5'-phosphate decarboxylase (230 aa).

Substrate contacts are provided by residues Asp-10, Lys-32, Asp-59–Thr-68, Thr-116, Arg-177, Gln-186, Gly-206, and Arg-207. The active-site Proton donor is Lys-61.

The protein belongs to the OMP decarboxylase family. Type 1 subfamily. Homodimer.

The enzyme catalyses orotidine 5'-phosphate + H(+) = UMP + CO2. It functions in the pathway pyrimidine metabolism; UMP biosynthesis via de novo pathway; UMP from orotate: step 2/2. In terms of biological role, catalyzes the decarboxylation of orotidine 5'-monophosphate (OMP) to uridine 5'-monophosphate (UMP). This Methylacidiphilum infernorum (isolate V4) (Methylokorus infernorum (strain V4)) protein is Orotidine 5'-phosphate decarboxylase.